The following is a 130-amino-acid chain: Small ribosomal subunit protein uS11 (130 aa).

This sequence belongs to the universal ribosomal protein uS11 family. In terms of assembly, part of the 30S ribosomal subunit. Interacts with proteins S7 and S18. Binds to IF-3.

Located on the platform of the 30S subunit, it bridges several disparate RNA helices of the 16S rRNA. Forms part of the Shine-Dalgarno cleft in the 70S ribosome. In Shewanella halifaxensis (strain HAW-EB4), this protein is Small ribosomal subunit protein uS11.